Reading from the N-terminus, the 248-residue chain is MDILQFPINMLNYFYEISGVEVGQHFYWQIGGFQVHAQVLITSWIVIAVLLGSATLAVRDPQIIPNGAQNFLEYVLEFVRDLARTQIGEEEYGPWVPFIGTMFLFIFVSNWAGALFPWGIIKLPHGELAAPTNDINTTVALALLTSVAYFYAGFTKRGLGYFGKYIQPTPILLPINILEDFTKPLSLSFRLFGNILADELVVAVLVSLVPIVVPIPVMFLGLFTSGIQALIFATLAAAYIGESMEGHH.

The next 5 helical transmembrane spans lie at 38–58 (QVLITSWIVIAVLLGSATLAV), 96–116 (VPFIGTMFLFIFVSNWAGALF), 135–155 (INTTVALALLTSVAYFYAGFT), 200–220 (LVVAVLVSLVPIVVPIPVMFL), and 221–241 (GLFTSGIQALIFATLAAAYIG).

The protein belongs to the ATPase A chain family. F-type ATPases have 2 components, CF(1) - the catalytic core - and CF(0) - the membrane proton channel. CF(1) has five subunits: alpha(3), beta(3), gamma(1), delta(1), epsilon(1). CF(0) has four main subunits: a, b, b' and c.

It is found in the plastid. The protein localises to the chloroplast thylakoid membrane. Its function is as follows. Key component of the proton channel; it plays a direct role in the translocation of protons across the membrane. This Cryptomeria japonica (Japanese cedar) protein is ATP synthase subunit a, chloroplastic.